Here is a 242-residue protein sequence, read N- to C-terminus: Ribose-5-phosphate isomerase A (242 aa).

Residues Ser39 to Thr42, Asp95 to Asp98, and Lys108 to Gly111 contribute to the substrate site. The Proton acceptor role is filled by Glu117. Lys135 contributes to the substrate binding site.

This sequence belongs to the ribose 5-phosphate isomerase family. Homodimer.

It catalyses the reaction aldehydo-D-ribose 5-phosphate = D-ribulose 5-phosphate. It functions in the pathway carbohydrate degradation; pentose phosphate pathway; D-ribose 5-phosphate from D-ribulose 5-phosphate (non-oxidative stage): step 1/1. Functionally, catalyzes the reversible conversion of ribose-5-phosphate to ribulose 5-phosphate. The chain is Ribose-5-phosphate isomerase A from Chlamydia trachomatis serovar A (strain ATCC VR-571B / DSM 19440 / HAR-13).